A 107-amino-acid chain; its full sequence is Benzene 1,2-dioxygenase system ferredoxin subunit (107 aa).

One can recognise a Rieske domain in the interval 4–99; the sequence is TYILRQSDLP…IKVEGDEVHV (96 aa). Cys43, His45, Cys62, and His65 together coordinate [2Fe-2S] cluster.

It belongs to the bacterial ring-hydroxylating dioxygenase ferredoxin component family. As to quaternary structure, this dioxygenase system consists of four proteins: the two subunits of the hydroxylase component (BnzA and BnzB), a ferredoxin (BnzC) and a ferredoxin reductase (BnzD).

It participates in aromatic compound metabolism; benzene degradation; catechol from benzene: step 1/2. This protein seems to be a 2Fe-2S ferredoxin. This is Benzene 1,2-dioxygenase system ferredoxin subunit (bnzC) from Pseudomonas putida (Arthrobacter siderocapsulatus).